The chain runs to 104 residues: AVIToxin-VAR1 (104 aa).

A signal peptide spans 1–19 (MRSLLCAPLLLLLLSAGES). 5 disulfide bridges follow: cysteine 26–cysteine 38, cysteine 32–cysteine 50, cysteine 37–cysteine 78, cysteine 60–cysteine 86, and cysteine 80–cysteine 96.

This sequence belongs to the AVIT (prokineticin) family. Expressed by the venom gland.

Its subcellular location is the secreted. Functionally, potent agonist for both PKR1/PROKR1 and PKR2/PROKR2. Potently contracts gastrointestinal (GI) smooth muscle. The sequence is that of AVIToxin-VAR1 from Varanus varius (Lace monitor lizard).